Reading from the N-terminus, the 100-residue chain is Large ribosomal subunit protein uL23 (100 aa).

This sequence belongs to the universal ribosomal protein uL23 family. In terms of assembly, part of the 50S ribosomal subunit. Contacts protein L29, and trigger factor when it is bound to the ribosome.

Its function is as follows. One of the early assembly proteins it binds 23S rRNA. One of the proteins that surrounds the polypeptide exit tunnel on the outside of the ribosome. Forms the main docking site for trigger factor binding to the ribosome. The polypeptide is Large ribosomal subunit protein uL23 (Pasteurella multocida (strain Pm70)).